The sequence spans 608 residues: Chaperone protein HtpG (608 aa).

Residues 1–332 form an a; substrate-binding region; it reads MQFQTEVNQL…VEDLPLNVSR (332 aa). The segment at 333-536 is b; the sequence is EILQENQILK…KNKPDFAMQQ (204 aa). The c stretch occupies residues 537-608; it reads LLKQMGQEQN…LTKIINKAFS (72 aa).

Belongs to the heat shock protein 90 family. In terms of assembly, homodimer.

The protein localises to the cytoplasm. Functionally, molecular chaperone. Has ATPase activity. The chain is Chaperone protein HtpG from Campylobacter jejuni subsp. jejuni serotype O:6 (strain 81116 / NCTC 11828).